A 295-amino-acid chain; its full sequence is Protein FAM221A (295 aa).

The segment at 244–295 (SEPPGIDKQVSSMRLSEEDDMAYFERRYQERLRKEKEHKRQKNSKPPTTQRP) is disordered. Positions 266-278 (YFERRYQERLRKE) are enriched in basic and acidic residues.

This sequence belongs to the FAM221 family.

The polypeptide is Protein FAM221A (fam221a) (Xenopus laevis (African clawed frog)).